Here is a 327-residue protein sequence, read N- to C-terminus: Inactive peptidyl-prolyl cis-trans isomerase FKBP6 (327 aa).

Residues 54-143 (DASVLVKYSG…LFEIELLDFL (90 aa)) enclose the PPIase FKBP-type domain. TPR repeat units follow at residues 171–204 (AATEREFGNYLFRQNRFYDAKVRYKRALLLLRRR), 219–252 (LPVLLNLSFTYLKLDRPTIALCYGEQALIIDQKN), and 253–286 (AKALFRCGQACLLLTEYQKARDFLVRAQKEQPFN).

The protein belongs to the FKBP6 family. As to quaternary structure, interacts (via TPR repeats) with HSP90. Interacts with HSP72/HSPA2 and CLTC. Interacts with GAPDH; leading to inhibit GAPDH catalytic activity. In terms of tissue distribution, detected in all tissues examined, with higher expression in testis, heart, skeletal muscle, liver, and kidney.

Its subcellular location is the cytoplasm. The protein resides in the nucleus. In terms of biological role, has an essential role in spermatogenesis. It is required to repress transposable elements and prevent their mobilization, which is essential for the germline integrity. Acts via the piRNA metabolic process, which mediates the repression of transposable elements during meiosis by forming complexes composed of piRNAs and Piwi proteins and govern the methylation and subsequent repression of transposons. Acts as a co-chaperone via its interaction with HSP90 and is required for the piRNA amplification process, the secondary piRNA biogenesis. May be required together with HSP90 in removal of 16 nucleotide ping-pong by-products from Piwi complexes, possibly facilitating turnover of Piwi complexes. The sequence is that of Inactive peptidyl-prolyl cis-trans isomerase FKBP6 (FKBP6) from Homo sapiens (Human).